Consider the following 397-residue polypeptide: Elongation factor Tu (397 aa).

One can recognise a tr-type G domain in the interval 10-207; sequence KPHVNIGTIG…AVDESIPEPV (198 aa). Residues 19–26 are G1; it reads GHVDHGKT. 19–26 contacts GTP; that stretch reads GHVDHGKT. Mg(2+) is bound at residue Thr-26. Residues 63-67 form a G2 region; that stretch reads GITIN. The G3 stretch occupies residues 84-87; sequence DAPG. GTP is bound by residues 84-88 and 139-142; these read DAPGH and NKSD. Positions 139–142 are G4; sequence NKSD. The G5 stretch occupies residues 177 to 179; it reads SGL.

Belongs to the TRAFAC class translation factor GTPase superfamily. Classic translation factor GTPase family. EF-Tu/EF-1A subfamily. In terms of assembly, monomer.

It is found in the cytoplasm. The enzyme catalyses GTP + H2O = GDP + phosphate + H(+). GTP hydrolase that promotes the GTP-dependent binding of aminoacyl-tRNA to the A-site of ribosomes during protein biosynthesis. The chain is Elongation factor Tu from Clavibacter michiganensis subsp. michiganensis (strain NCPPB 382).